The chain runs to 251 residues: 3-deoxy-manno-octulosonate cytidylyltransferase (251 aa).

The protein belongs to the KdsB family.

It is found in the cytoplasm. The catalysed reaction is 3-deoxy-alpha-D-manno-oct-2-ulosonate + CTP = CMP-3-deoxy-beta-D-manno-octulosonate + diphosphate. It participates in nucleotide-sugar biosynthesis; CMP-3-deoxy-D-manno-octulosonate biosynthesis; CMP-3-deoxy-D-manno-octulosonate from 3-deoxy-D-manno-octulosonate and CTP: step 1/1. The protein operates within bacterial outer membrane biogenesis; lipopolysaccharide biosynthesis. Its function is as follows. Activates KDO (a required 8-carbon sugar) for incorporation into bacterial lipopolysaccharide in Gram-negative bacteria. In Vibrio vulnificus (strain YJ016), this protein is 3-deoxy-manno-octulosonate cytidylyltransferase.